Consider the following 447-residue polypeptide: Glutamate--tRNA ligase 2 (447 aa).

A 'HIGH' region motif is present at residues 8–18 (PSPTGYLHVGN). Positions 239 to 243 (KLSKR) match the 'KMSKS' region motif. K242 provides a ligand contact to ATP.

Belongs to the class-I aminoacyl-tRNA synthetase family. Glutamate--tRNA ligase type 1 subfamily. In terms of assembly, monomer.

Its subcellular location is the cytoplasm. The enzyme catalyses tRNA(Glu) + L-glutamate + ATP = L-glutamyl-tRNA(Glu) + AMP + diphosphate. Its function is as follows. Catalyzes the attachment of glutamate to tRNA(Glu) in a two-step reaction: glutamate is first activated by ATP to form Glu-AMP and then transferred to the acceptor end of tRNA(Glu). This is Glutamate--tRNA ligase 2 from Granulibacter bethesdensis (strain ATCC BAA-1260 / CGDNIH1).